Reading from the N-terminus, the 417-residue chain is Phosphoglycerate kinase, cytosolic (417 aa).

12 residues coordinate (2R)-3-phosphoglycerate: Val23, Asp24, Phe25, Asn26, Arg39, Ser61, His62, Gly64, Arg65, Arg132, His168, and Arg169. ADP-binding residues include Gly214 and Ala215. Gly214 contributes to the CDP binding site. 2 residues coordinate AMP: Ala215 and Lys216. Residue Ala215 coordinates ATP. Ala215 is a Mg(2+) binding site. Residue Lys216 participates in (2R)-3-phosphoglycerate binding. Asp219 is a CDP binding site. Residue Asp219 participates in Mg(2+) binding. Lys220 and Gly238 together coordinate ADP. An AMP-binding site is contributed by Lys220. Residue Lys220 coordinates ATP. CDP is bound at residue Gly238. Ala239 and Ala311 together coordinate AMP. ATP contacts are provided by Ala239 and Ala311. Positions 311 and 335 each coordinate ADP. CDP is bound by residues Gly336 and Phe341. ADP contacts are provided by Phe341, Glu342, Asp374, and Ser375. Glu342 contacts AMP. ATP contacts are provided by Glu342, Asp374, and Ser375. Residue Asp374 participates in Mg(2+) binding.

The protein belongs to the phosphoglycerate kinase family. As to quaternary structure, monomer. The cofactor is Mg(2+).

It is found in the cytoplasm. The catalysed reaction is (2R)-3-phosphoglycerate + ATP = (2R)-3-phospho-glyceroyl phosphate + ADP. It participates in carbohydrate degradation; glycolysis; pyruvate from D-glyceraldehyde 3-phosphate: step 2/5. The protein is Phosphoglycerate kinase, cytosolic (PGKB) of Leishmania major.